The following is an 81-amino-acid chain: Cytotoxin I-like T-15 (81 aa).

The signal sequence occupies residues 1 to 21; the sequence is MKTLLLTLVVVTIVCLDLGYT. 4 disulfide bridges follow: Cys24–Cys42, Cys35–Cys59, Cys63–Cys74, and Cys75–Cys80.

This sequence belongs to the three-finger toxin family. Short-chain subfamily. Type IA cytotoxin sub-subfamily. Monomer in solution; Homodimer and oligomer in the presence of negatively charged lipids forming a pore with a size ranging between 20 and 30 Angstroms. As to expression, expressed by the venom gland.

It is found in the secreted. It localises to the target cell membrane. Its function is as follows. Shows cytolytic activity on many different cells by forming pore in lipid membranes. In vivo, increases heart rate or kills the animal by cardiac arrest. In addition, it binds to heparin with high affinity, interacts with Kv channel-interacting protein 1 (KCNIP1) in a calcium-independent manner, and binds to integrin alpha-V/beta-3 (ITGAV/ITGB3) with moderate affinity. The polypeptide is Cytotoxin I-like T-15 (Naja atra (Chinese cobra)).